The following is a 302-amino-acid chain: Putative F-box protein At1g32420 (302 aa).

The span at 1 to 10 (MKRGNEENNH) shows a compositional bias: basic and acidic residues. The disordered stretch occupies residues 1–27 (MKRGNEENNHKTSSSSSTQRLSRRKIS). One can recognise an F-box domain in the interval 31–78 (KSGNVNIPLDLTVEILKKLPAKSLLRFQCVSKQWLSIISSRRDFIDSI).

This chain is Putative F-box protein At1g32420, found in Arabidopsis thaliana (Mouse-ear cress).